Reading from the N-terminus, the 103-residue chain is Histone H4 (103 aa).

Residues 1-14 (MSGRGKGGKGLGKG) are compositionally biased toward gly residues. The tract at residues 1–20 (MSGRGKGGKGLGKGGAKRHR) is disordered. Position 6 is an N6-acetyl-N6-methyllysine; alternate (Lys6). 3 positions are modified to N6-acetyllysine; alternate: Lys6, Lys9, and Lys13. Lys6, Lys9, and Lys13 each carry N6-methyllysine; alternate. Residues Lys9 and Lys13 each carry the N6-butyryllysine; alternate modification. Lys13 bears the N6-acetyl-N6-methyllysine; alternate mark. Lys17 carries the N6-acetyllysine modification. Residues 17 to 21 (KRHRK) mediate DNA binding. Lys32 is modified (N6-succinyllysine). Arg56 is subject to Omega-N-methylarginine. Phosphoserine occurs at positions 61 and 65. Lys78 carries the N6-succinyllysine modification. Lys80 carries the post-translational modification N6-acetyllysine. At Lys92 the chain carries N6-glutaryllysine.

Belongs to the histone H4 family. As to quaternary structure, the nucleosome is a histone octamer containing two molecules each of H2A, H2B, H3 and H4 assembled in one H3-H4 heterotetramer and two H2A-H2B heterodimers. The octamer wraps approximately 147 bp of DNA. Histone H4 is a component of the UAF (upstream activation factor) complex which consists of UAF30, RRN5, RRN9, RRN10, and histones H3 and H4. In terms of processing, glutarylation at Lys-92 (H4K91glu) destabilizes nucleosomes by promoting dissociation of the H2A-H2B dimers from nucleosomes.

The protein resides in the nucleus. It localises to the chromosome. Functionally, core component of nucleosome. Nucleosomes wrap and compact DNA into chromatin, limiting DNA accessibility to the cellular machineries which require DNA as a template. Histones thereby play a central role in transcription regulation, DNA repair, DNA replication and chromosomal stability. DNA accessibility is regulated via a complex set of post-translational modifications of histones, also called histone code, and nucleosome remodeling. Component of the UAF (upstream activation factor) complex which interacts with the upstream element of the RNA polymerase I promoter and forms a stable preinitiation complex. Together with SPT15/TBP UAF seems to stimulate basal transcription to a fully activated level. The sequence is that of Histone H4 (HHF1) from Saccharomyces cerevisiae (strain ATCC 204508 / S288c) (Baker's yeast).